The primary structure comprises 124 residues: Small ribosomal subunit protein uS12 (124 aa).

Asp89 carries the 3-methylthioaspartic acid modification.

This sequence belongs to the universal ribosomal protein uS12 family. As to quaternary structure, part of the 30S ribosomal subunit. Contacts proteins S8 and S17. May interact with IF1 in the 30S initiation complex.

Its function is as follows. With S4 and S5 plays an important role in translational accuracy. In terms of biological role, interacts with and stabilizes bases of the 16S rRNA that are involved in tRNA selection in the A site and with the mRNA backbone. Located at the interface of the 30S and 50S subunits, it traverses the body of the 30S subunit contacting proteins on the other side and probably holding the rRNA structure together. The combined cluster of proteins S8, S12 and S17 appears to hold together the shoulder and platform of the 30S subunit. The polypeptide is Small ribosomal subunit protein uS12 (Proteus mirabilis (strain HI4320)).